Consider the following 230-residue polypeptide: Demethylmenaquinone methyltransferase (230 aa).

Residues threonine 62, aspartate 80, 102-103 (DG), and serine 119 contribute to the S-adenosyl-L-methionine site.

Belongs to the class I-like SAM-binding methyltransferase superfamily. MenG/UbiE family.

It catalyses the reaction a 2-demethylmenaquinol + S-adenosyl-L-methionine = a menaquinol + S-adenosyl-L-homocysteine + H(+). Its pathway is quinol/quinone metabolism; menaquinone biosynthesis; menaquinol from 1,4-dihydroxy-2-naphthoate: step 2/2. Its function is as follows. Methyltransferase required for the conversion of demethylmenaquinol (DMKH2) to menaquinol (MKH2). This is Demethylmenaquinone methyltransferase from Streptomyces griseus subsp. griseus (strain JCM 4626 / CBS 651.72 / NBRC 13350 / KCC S-0626 / ISP 5235).